The following is a 114-amino-acid chain: Protachykinin (114 aa).

The signal sequence occupies residues 1-19 (MKFLLPSIVIFLVLCQVFG). A propeptide spanning residues 20 to 55 (EELGPKEDLDYWTGSNQVQDEWLQADPFREIIRRMT) is cleaved from the precursor. 2 positions are modified to methionine amide: methionine 67 and methionine 91.

Belongs to the tachykinin family. In terms of tissue distribution, expressed in all parts of the brain, with robust expression in the olfactory bulbs and tracts, moderate expression in the hypothalamus and posterior brain, and weak expression in the telencephalon-preoptic region and optic tectum-thalamus. Also expressed in nerve fibers, intestine, testes and pituitary gland. Not expressed in the liver or kidneys.

The protein localises to the secreted. Tachykinins are active peptides which excite neurons, evoke behavioral responses, are potent vasodilators and secretagogues, and contract (directly or indirectly) many smooth muscles. Its function is as follows. Substance P produces a voltage-dependent inhibition of calcium current in retinal bipolar cells. It can enhance learning and memory, may regulate social approach and feeding behaviors, and can accelerate the functional recovery in postural balance in response to light after unilateral labyrinthectomy. This Carassius auratus (Goldfish) protein is Protachykinin.